A 417-amino-acid chain; its full sequence is Serine hydroxymethyltransferase (417 aa).

Residues Leu121 and 125–127 (GHL) each bind (6S)-5,6,7,8-tetrahydrofolate. The residue at position 229 (Lys229) is an N6-(pyridoxal phosphate)lysine. Residue 354–356 (SPF) participates in (6S)-5,6,7,8-tetrahydrofolate binding.

This sequence belongs to the SHMT family. In terms of assembly, homodimer. The cofactor is pyridoxal 5'-phosphate.

The protein resides in the cytoplasm. The catalysed reaction is (6R)-5,10-methylene-5,6,7,8-tetrahydrofolate + glycine + H2O = (6S)-5,6,7,8-tetrahydrofolate + L-serine. It functions in the pathway one-carbon metabolism; tetrahydrofolate interconversion. Its pathway is amino-acid biosynthesis; glycine biosynthesis; glycine from L-serine: step 1/1. Catalyzes the reversible interconversion of serine and glycine with tetrahydrofolate (THF) serving as the one-carbon carrier. This reaction serves as the major source of one-carbon groups required for the biosynthesis of purines, thymidylate, methionine, and other important biomolecules. Also exhibits THF-independent aldolase activity toward beta-hydroxyamino acids, producing glycine and aldehydes, via a retro-aldol mechanism. This chain is Serine hydroxymethyltransferase, found in Dichelobacter nodosus (strain VCS1703A).